The chain runs to 219 residues: Endonuclease III (219 aa).

In terms of domain architecture, HhH spans 109–128 (RDELVKLPGVGRKTANVVVS). 4 residues coordinate [4Fe-4S] cluster: Cys-189, Cys-196, Cys-199, and Cys-205.

This sequence belongs to the Nth/MutY family. [4Fe-4S] cluster serves as cofactor.

The enzyme catalyses 2'-deoxyribonucleotide-(2'-deoxyribose 5'-phosphate)-2'-deoxyribonucleotide-DNA = a 3'-end 2'-deoxyribonucleotide-(2,3-dehydro-2,3-deoxyribose 5'-phosphate)-DNA + a 5'-end 5'-phospho-2'-deoxyribonucleoside-DNA + H(+). Its function is as follows. DNA repair enzyme that has both DNA N-glycosylase activity and AP-lyase activity. The DNA N-glycosylase activity releases various damaged pyrimidines from DNA by cleaving the N-glycosidic bond, leaving an AP (apurinic/apyrimidinic) site. The AP-lyase activity cleaves the phosphodiester bond 3' to the AP site by a beta-elimination, leaving a 3'-terminal unsaturated sugar and a product with a terminal 5'-phosphate. The sequence is that of Endonuclease III from Bacillus subtilis (strain 168).